Here is a 1449-residue protein sequence, read N- to C-terminus: Gag-Pol polyprotein (1449 aa).

Gly-2 is lipidated: N-myristoyl glycine; by host. Positions 7–31 (VLTGGKLDQWESIYLRPGGKKKYRM) are interaction with Gp41. Residues 8–43 (LTGGKLDQWESIYLRPGGKKKYRMKHLVWASRELER) form an interaction with host CALM1 region. Residues 12-19 (KLDQWESI) are interaction with host AP3D1. Residues 14–33 (DQWESIYLRPGGKKKYRMKH) are interaction with membrane phosphatidylinositol 4,5-bisphosphate and RNA. Residues 16–22 (WESIYLR) carry the Nuclear export signal motif. The Nuclear localization signal motif lies at 26–32 (KKKYRMK). Residues 73–77 (EELRS) are interaction with membrane phosphatidylinositol 4,5-bisphosphate. Tyr-134 is modified (phosphotyrosine; by host). Residues 191–229 (NTVGGHQAAMQMLKEVINEEAADWDRTHPVPVGPLPPGQ) are interaction with human PPIA/CYPA and NUP153. The interval 279 to 365 (YSPVSILEIK…GGPAHKARVL (87 aa)) is dimerization/Multimerization of capsid protein p24. 2 CCHC-type zinc fingers span residues 393–410 (IKCFNCGKEGHLARNCKA) and 414–431 (GGCWKCGQEGHQMKDCKN). Residues 447–461 (ETRKLPPDNNKERAH) are compositionally biased toward basic and acidic residues. Residues 447–489 (ETRKLPPDNNKERAHSPATRELWVSGGEEHTGEGDAGEPGEDR) are disordered. The interval 499 to 503 (PQITL) is dimerization of protease. A Peptidase A2 domain is found at 518 to 587 (REALLDTGAD…TPVNIIGRNL (70 aa)). Asp-523 (for protease activity; shared with dimeric partner) is an active-site residue. Dimerization of protease regions lie at residues 547-553 (GIGGFIK) and 586-598 (NLLTQIGCTLNFP). The Reverse transcriptase domain maps to 641-831 (EGKISRIGPE…PPFLWMGYEL (191 aa)). Mg(2+) is bound by residues Asp-707, Asp-782, and Asp-783. The tract at residues 824-832 (FLWMGYELH) is RT 'primer grip'. Residues 995–1011 (WEAWWTDHWQATWIPEW) carry the Tryptophan repeat motif motif. The RNase H type-1 domain occupies 1031 to 1154 (ISGAETFYVD…VDKLVSSGIR (124 aa)). Residues Asp-1040, Glu-1075, Asp-1095, and Asp-1146 each contribute to the Mg(2+) site. The Integrase-type zinc-finger motif lies at 1160-1201 (DGIEKAQEDHDRYHSNWKAMASDFNLPPIVAKEIVASCDKCQ). Residues His-1169, His-1173, Cys-1197, and Cys-1200 each coordinate Zn(2+). The Integrase catalytic domain maps to 1211 to 1361 (VNCSPGVWQL…TAGERIIDII (151 aa)). Mg(2+) contacts are provided by Asp-1221, Asp-1273, and Glu-1309. A DNA-binding region (integrase-type) is located at residues 1380–1427 (FRVYYRDSRDPIWKGPAKLLWKGEGAVVIQDNGDIKVVPRRKAKIIRD).

In terms of assembly, homotrimer; further assembles as hexamers of trimers. Interacts with gp41 (via C-terminus). Interacts with host CALM1; this interaction induces a conformational change in the Matrix protein, triggering exposure of the myristate group. Interacts with host AP3D1; this interaction allows the polyprotein trafficking to multivesicular bodies during virus assembly. Part of the pre-integration complex (PIC) which is composed of viral genome, matrix protein, Vpr and integrase. Homodimer; the homodimer further multimerizes as homohexamers or homopentamers. Interacts with human PPIA/CYPA; This interaction stabilizes the capsid. Interacts with human NUP153. Interacts with host PDZD8; this interaction stabilizes the capsid. Interacts with monkey TRIM5; this interaction destabilizes the capsid. As to quaternary structure, homodimer, whose active site consists of two apposed aspartic acid residues. In terms of assembly, heterodimer of p66 RT and p51 RT (RT p66/p51). Heterodimerization of RT is essential for DNA polymerase activity. The overall folding of the subdomains is similar in p66 RT and p51 RT but the spatial arrangements of the subdomains are dramatically different. Homotetramer; may further associate as a homohexadecamer. Part of the pre-integration complex (PIC) which is composed of viral genome, matrix protein, Vpr and integrase. Interacts with human SMARCB1/INI1 and human PSIP1/LEDGF isoform 1. Interacts with human KPNA3; this interaction might play a role in nuclear import of the pre-integration complex. Interacts with human NUP153; this interaction might play a role in nuclear import of the pre-integration complex. It depends on Mg(2+) as a cofactor. Post-translationally, specific enzymatic cleavages by the viral protease yield mature proteins. The protease is released by autocatalytic cleavage. The polyprotein is cleaved during and after budding, this process is termed maturation. Proteolytic cleavage of p66 RT removes the RNase H domain to yield the p51 RT subunit. Nucleocapsid protein p7 might be further cleaved after virus entry. In terms of processing, tyrosine phosphorylated presumably in the virion by a host kinase. Phosphorylation is apparently not a major regulator of membrane association. Phosphorylated possibly by host MAPK1; this phosphorylation is necessary for Pin1-mediated virion uncoating. Post-translationally, methylated by host PRMT6, impairing its function by reducing RNA annealing and the initiation of reverse transcription.

Its subcellular location is the host cell membrane. It localises to the host endosome. The protein resides in the host multivesicular body. It is found in the virion membrane. The protein localises to the host nucleus. Its subcellular location is the host cytoplasm. It localises to the virion. It catalyses the reaction Specific for a P1 residue that is hydrophobic, and P1' variable, but often Pro.. It carries out the reaction Endohydrolysis of RNA in RNA/DNA hybrids. Three different cleavage modes: 1. sequence-specific internal cleavage of RNA. Human immunodeficiency virus type 1 and Moloney murine leukemia virus enzymes prefer to cleave the RNA strand one nucleotide away from the RNA-DNA junction. 2. RNA 5'-end directed cleavage 13-19 nucleotides from the RNA end. 3. DNA 3'-end directed cleavage 15-20 nucleotides away from the primer terminus.. The catalysed reaction is 3'-end directed exonucleolytic cleavage of viral RNA-DNA hybrid.. The enzyme catalyses DNA(n) + a 2'-deoxyribonucleoside 5'-triphosphate = DNA(n+1) + diphosphate. Protease: The viral protease is inhibited by many synthetic protease inhibitors (PIs), such as amprenavir, atazanavir, indinavir, loprinavir, nelfinavir, ritonavir and saquinavir. Use of protease inhibitors in tritherapy regimens permit more ambitious therapeutic strategies. Reverse transcriptase/ribonuclease H: RT can be inhibited either by nucleoside RT inhibitors (NRTIs) or by non nucleoside RT inhibitors (NNRTIs). NRTIs act as chain terminators, whereas NNRTIs inhibit DNA polymerization by binding a small hydrophobic pocket near the RT active site and inducing an allosteric change in this region. Classical NRTIs are abacavir, adefovir (PMEA), didanosine (ddI), lamivudine (3TC), stavudine (d4T), tenofovir (PMPA), zalcitabine (ddC), and zidovudine (AZT). Classical NNRTIs are atevirdine (BHAP U-87201E), delavirdine, efavirenz (DMP-266), emivirine (I-EBU), and nevirapine (BI-RG-587). The tritherapies used as a basic effective treatment of AIDS associate two NRTIs and one NNRTI. Its function is as follows. Mediates, with Gag polyprotein, the essential events in virion assembly, including binding the plasma membrane, making the protein-protein interactions necessary to create spherical particles, recruiting the viral Env proteins, and packaging the genomic RNA via direct interactions with the RNA packaging sequence (Psi). Gag-Pol polyprotein may regulate its own translation, by the binding genomic RNA in the 5'-UTR. At low concentration, the polyprotein would promote translation, whereas at high concentration, the polyprotein would encapsidate genomic RNA and then shut off translation. In terms of biological role, targets the polyprotein to the plasma membrane via a multipartite membrane-binding signal, that includes its myristoylated N-terminus. Matrix protein is part of the pre-integration complex. Implicated in the release from host cell mediated by Vpu. Binds to RNA. Forms the conical core that encapsulates the genomic RNA-nucleocapsid complex in the virion. Most core are conical, with only 7% tubular. The core is constituted by capsid protein hexamer subunits. The core is disassembled soon after virion entry. Host restriction factors such as TRIM5-alpha or TRIMCyp bind retroviral capsids and cause premature capsid disassembly, leading to blocks in reverse transcription. Capsid restriction by TRIM5 is one of the factors which restricts HIV-1 to the human species. Host PIN1 apparently facilitates the virion uncoating. On the other hand, interactions with PDZD8 or CYPA stabilize the capsid. Functionally, encapsulates and protects viral dimeric unspliced genomic RNA (gRNA). Binds these RNAs through its zinc fingers. Acts as a nucleic acid chaperone which is involved in rearangement of nucleic acid secondary structure during gRNA retrotranscription. Also facilitates template switch leading to recombination. As part of the polyprotein, participates in gRNA dimerization, packaging, tRNA incorporation and virion assembly. Its function is as follows. Aspartyl protease that mediates proteolytic cleavages of Gag and Gag-Pol polyproteins during or shortly after the release of the virion from the plasma membrane. Cleavages take place as an ordered, step-wise cascade to yield mature proteins. This process is called maturation. Displays maximal activity during the budding process just prior to particle release from the cell. Also cleaves Nef and Vif, probably concomitantly with viral structural proteins on maturation of virus particles. Hydrolyzes host EIF4GI and PABP1 in order to shut off the capped cellular mRNA translation. The resulting inhibition of cellular protein synthesis serves to ensure maximal viral gene expression and to evade host immune response. Also mediates cleavage of host YTHDF3. Mediates cleavage of host CARD8, thereby activating the CARD8 inflammasome, leading to the clearance of latent HIV-1 in patient CD4(+) T-cells after viral reactivation; in contrast, HIV-1 can evade CARD8-sensing when its protease remains inactive in infected cells prior to viral budding. In terms of biological role, multifunctional enzyme that converts the viral RNA genome into dsDNA in the cytoplasm, shortly after virus entry into the cell. This enzyme displays a DNA polymerase activity that can copy either DNA or RNA templates, and a ribonuclease H (RNase H) activity that cleaves the RNA strand of RNA-DNA heteroduplexes in a partially processive 3' to 5' endonucleasic mode. Conversion of viral genomic RNA into dsDNA requires many steps. A tRNA(3)-Lys binds to the primer-binding site (PBS) situated at the 5'-end of the viral RNA. RT uses the 3' end of the tRNA primer to perform a short round of RNA-dependent minus-strand DNA synthesis. The reading proceeds through the U5 region and ends after the repeated (R) region which is present at both ends of viral RNA. The portion of the RNA-DNA heteroduplex is digested by the RNase H, resulting in a ssDNA product attached to the tRNA primer. This ssDNA/tRNA hybridizes with the identical R region situated at the 3' end of viral RNA. This template exchange, known as minus-strand DNA strong stop transfer, can be either intra- or intermolecular. RT uses the 3' end of this newly synthesized short ssDNA to perform the RNA-dependent minus-strand DNA synthesis of the whole template. RNase H digests the RNA template except for two polypurine tracts (PPTs) situated at the 5'-end and near the center of the genome. It is not clear if both polymerase and RNase H activities are simultaneous. RNase H probably can proceed both in a polymerase-dependent (RNA cut into small fragments by the same RT performing DNA synthesis) and a polymerase-independent mode (cleavage of remaining RNA fragments by free RTs). Secondly, RT performs DNA-directed plus-strand DNA synthesis using the PPTs that have not been removed by RNase H as primers. PPTs and tRNA primers are then removed by RNase H. The 3' and 5' ssDNA PBS regions hybridize to form a circular dsDNA intermediate. Strand displacement synthesis by RT to the PBS and PPT ends produces a blunt ended, linear dsDNA copy of the viral genome that includes long terminal repeats (LTRs) at both ends. Catalyzes viral DNA integration into the host chromosome, by performing a series of DNA cutting and joining reactions. This enzyme activity takes place after virion entry into a cell and reverse transcription of the RNA genome in dsDNA. The first step in the integration process is 3' processing. This step requires a complex comprising the viral genome, matrix protein, Vpr and integrase. This complex is called the pre-integration complex (PIC). The integrase protein removes 2 nucleotides from each 3' end of the viral DNA, leaving recessed CA OH's at the 3' ends. In the second step, the PIC enters cell nucleus. This process is mediated through integrase and Vpr proteins, and allows the virus to infect a non dividing cell. This ability to enter the nucleus is specific of lentiviruses, other retroviruses cannot and rely on cell division to access cell chromosomes. In the third step, termed strand transfer, the integrase protein joins the previously processed 3' ends to the 5' ends of strands of target cellular DNA at the site of integration. The 5'-ends are produced by integrase-catalyzed staggered cuts, 5 bp apart. A Y-shaped, gapped, recombination intermediate results, with the 5'-ends of the viral DNA strands and the 3' ends of target DNA strands remaining unjoined, flanking a gap of 5 bp. The last step is viral DNA integration into host chromosome. This involves host DNA repair synthesis in which the 5 bp gaps between the unjoined strands are filled in and then ligated. Since this process occurs at both cuts flanking the HIV genome, a 5 bp duplication of host DNA is produced at the ends of HIV-1 integration. Alternatively, Integrase may catalyze the excision of viral DNA just after strand transfer, this is termed disintegration. The sequence is that of Gag-Pol polyprotein (gag-pol) from Human immunodeficiency virus type 1 group N (isolate YBF30) (HIV-1).